A 373-amino-acid chain; its full sequence is Chaperone protein DnaJ (373 aa).

The J domain maps to 5–70 (DYYEVLGLQK…EKKSNYDQFG (66 aa)). The CR-type zinc-finger motif lies at 132–214 (GVEKEITVNR…CRGNGNVRKT (83 aa)). Zn(2+) is bound by residues Cys145, Cys148, Cys162, Cys165, Cys188, Cys191, Cys202, and Cys205. 4 CXXCXGXG motif repeats span residues 145 to 152 (CEHCNGSG), 162 to 169 (CPTCSGTG), 188 to 195 (CDRCSGTG), and 202 to 209 (CTHCRGNG).

Belongs to the DnaJ family. In terms of assembly, homodimer. Requires Zn(2+) as cofactor.

It localises to the cytoplasm. Functionally, participates actively in the response to hyperosmotic and heat shock by preventing the aggregation of stress-denatured proteins and by disaggregating proteins, also in an autonomous, DnaK-independent fashion. Unfolded proteins bind initially to DnaJ; upon interaction with the DnaJ-bound protein, DnaK hydrolyzes its bound ATP, resulting in the formation of a stable complex. GrpE releases ADP from DnaK; ATP binding to DnaK triggers the release of the substrate protein, thus completing the reaction cycle. Several rounds of ATP-dependent interactions between DnaJ, DnaK and GrpE are required for fully efficient folding. Also involved, together with DnaK and GrpE, in the DNA replication of plasmids through activation of initiation proteins. The polypeptide is Chaperone protein DnaJ (Clostridium botulinum (strain Eklund 17B / Type B)).